The sequence spans 156 residues: Perlucin-like protein (156 aa).

An N-terminal signal peptide occupies residues 1-22; it reads MGKLTVVGILTLFIFYIVAASG. Intrachain disulfides connect cysteine 30–cysteine 41, cysteine 58–cysteine 156, and cysteine 131–cysteine 147. In terms of domain architecture, C-type lectin spans 37–156; the sequence is YKTNCYFFSP…CNTDQMGYIC (120 aa).

In terms of tissue distribution, component of the organic matrix of calcified shell layers like nacre and prisms.

It is found in the secreted. This chain is Perlucin-like protein, found in Mytilus galloprovincialis (Mediterranean mussel).